The sequence spans 968 residues: RNA polymerase-associated protein RapA (968 aa).

Positions 163 to 332 (EVGRRYAPRV…FARLRLLDPD (170 aa)) constitute a Helicase ATP-binding domain. 176–183 (DEVGLGKT) contacts ATP. A DEAH box motif is present at residues 278 to 281 (DEAH). A Helicase C-terminal domain is found at 491 to 643 (RVDWLIAFLK…ELTCPSGHVL (153 aa)).

The protein belongs to the SNF2/RAD54 helicase family. RapA subfamily. Interacts with the RNAP. Has a higher affinity for the core RNAP than for the holoenzyme. Its ATPase activity is stimulated by binding to RNAP.

In terms of biological role, transcription regulator that activates transcription by stimulating RNA polymerase (RNAP) recycling in case of stress conditions such as supercoiled DNA or high salt concentrations. Probably acts by releasing the RNAP, when it is trapped or immobilized on tightly supercoiled DNA. Does not activate transcription on linear DNA. Probably not involved in DNA repair. In Shewanella putrefaciens (strain CN-32 / ATCC BAA-453), this protein is RNA polymerase-associated protein RapA.